Here is a 598-residue protein sequence, read N- to C-terminus: Proline--tRNA ligase (598 aa).

This sequence belongs to the class-II aminoacyl-tRNA synthetase family. ProS type 1 subfamily. Homodimer.

It is found in the cytoplasm. It carries out the reaction tRNA(Pro) + L-proline + ATP = L-prolyl-tRNA(Pro) + AMP + diphosphate. In terms of biological role, catalyzes the attachment of proline to tRNA(Pro) in a two-step reaction: proline is first activated by ATP to form Pro-AMP and then transferred to the acceptor end of tRNA(Pro). As ProRS can inadvertently accommodate and process non-cognate amino acids such as alanine and cysteine, to avoid such errors it has two additional distinct editing activities against alanine. One activity is designated as 'pretransfer' editing and involves the tRNA(Pro)-independent hydrolysis of activated Ala-AMP. The other activity is designated 'posttransfer' editing and involves deacylation of mischarged Ala-tRNA(Pro). The misacylated Cys-tRNA(Pro) is not edited by ProRS. The chain is Proline--tRNA ligase from Synechococcus sp. (strain CC9311).